We begin with the raw amino-acid sequence, 266 residues long: Tryptophan synthase alpha chain (266 aa).

Catalysis depends on proton acceptor residues glutamate 51 and aspartate 62.

Belongs to the TrpA family. As to quaternary structure, tetramer of two alpha and two beta chains.

It carries out the reaction (1S,2R)-1-C-(indol-3-yl)glycerol 3-phosphate + L-serine = D-glyceraldehyde 3-phosphate + L-tryptophan + H2O. Its pathway is amino-acid biosynthesis; L-tryptophan biosynthesis; L-tryptophan from chorismate: step 5/5. The alpha subunit is responsible for the aldol cleavage of indoleglycerol phosphate to indole and glyceraldehyde 3-phosphate. The chain is Tryptophan synthase alpha chain from Thermosynechococcus vestitus (strain NIES-2133 / IAM M-273 / BP-1).